Consider the following 166-residue polypeptide: Regulatory protein RecX (166 aa).

Belongs to the RecX family.

The protein resides in the cytoplasm. Modulates RecA activity. The polypeptide is Regulatory protein RecX (Salmonella paratyphi C (strain RKS4594)).